Here is a 311-residue protein sequence, read N- to C-terminus: Bifunctional protein FolD (311 aa).

174 to 176 (GKG) contributes to the NADP(+) binding site.

This sequence belongs to the tetrahydrofolate dehydrogenase/cyclohydrolase family. In terms of assembly, homodimer.

The enzyme catalyses (6R)-5,10-methylene-5,6,7,8-tetrahydrofolate + NADP(+) = (6R)-5,10-methenyltetrahydrofolate + NADPH. The catalysed reaction is (6R)-5,10-methenyltetrahydrofolate + H2O = (6R)-10-formyltetrahydrofolate + H(+). Its pathway is one-carbon metabolism; tetrahydrofolate interconversion. Catalyzes the oxidation of 5,10-methylenetetrahydrofolate to 5,10-methenyltetrahydrofolate and then the hydrolysis of 5,10-methenyltetrahydrofolate to 10-formyltetrahydrofolate. This Pyrobaculum aerophilum (strain ATCC 51768 / DSM 7523 / JCM 9630 / CIP 104966 / NBRC 100827 / IM2) protein is Bifunctional protein FolD.